A 686-amino-acid chain; its full sequence is Tripartite terminase subunit 3 (686 aa).

Positions 220–227 (IPRRHGKT) match the Walker A motif motif. A Walker B motif motif is present at residues 315 to 320 (LLFVDE). Glutamate 320 acts as the For ATPase activity in catalysis. Active-site for nuclease activity residues include aspartate 474, glutamate 546, and aspartate 658.

The protein belongs to the herpesviridae TRM3 protein family. In terms of assembly, interacts with the terminase subunits TRM1 and TRM2. Interacts with portal protein.

The protein resides in the host nucleus. Functionally, component of the molecular motor that translocates viral genomic DNA in empty capsid during DNA packaging. Forms a tripartite terminase complex together with TRM1 and TRM2 in the host cytoplasm. Once the complex reaches the host nucleus, it interacts with the capsid portal vertex. This portal forms a ring in which genomic DNA is translocated into the capsid. TRM3 carries an RNase H-like nuclease activity that plays an important role for the cleavage of concatemeric viral DNA into unit length genomes. The polypeptide is Tripartite terminase subunit 3 (Alcelaphine herpesvirus 1 (strain C500) (AlHV-1)).